The chain runs to 351 residues: Farnesyl pyrophosphate synthase (351 aa).

Residues lysine 51, arginine 54, and glutamine 92 each coordinate isopentenyl diphosphate. 2 residues coordinate Mg(2+): aspartate 99 and aspartate 103. Arginine 108 is a binding site for dimethylallyl diphosphate. Arginine 109 lines the isopentenyl diphosphate pocket. 5 residues coordinate dimethylallyl diphosphate: lysine 196, threonine 197, glutamine 236, lysine 253, and lysine 262.

This sequence belongs to the FPP/GGPP synthase family. Mg(2+) serves as cofactor.

It catalyses the reaction isopentenyl diphosphate + dimethylallyl diphosphate = (2E)-geranyl diphosphate + diphosphate. The catalysed reaction is isopentenyl diphosphate + (2E)-geranyl diphosphate = (2E,6E)-farnesyl diphosphate + diphosphate. It functions in the pathway isoprenoid biosynthesis; farnesyl diphosphate biosynthesis; farnesyl diphosphate from geranyl diphosphate and isopentenyl diphosphate: step 1/1. Its pathway is isoprenoid biosynthesis; geranyl diphosphate biosynthesis; geranyl diphosphate from dimethylallyl diphosphate and isopentenyl diphosphate: step 1/1. Its function is as follows. Farnesyl pyrophosphate synthase; part of the second module of ergosterol biosynthesis pathway that includes the middle steps of the pathway. ERG20 catalyzes the sequential condensation of isopentenyl pyrophosphate with dimethylallyl pyrophosphate, and then with the resultant geranylpyrophosphate to the ultimate product farnesyl pyrophosphate. The second module is carried out in the vacuole and involves the formation of farnesyl diphosphate, which is also an important intermediate in the biosynthesis of ubiquinone, dolichol, heme and prenylated proteins. Activity by the mevalonate kinase ERG12 first converts mevalonate into 5-phosphomevalonate. 5-phosphomevalonate is then further converted to 5-diphosphomevalonate by the phosphomevalonate kinase ERG8. The diphosphomevalonate decarboxylase MVD then produces isopentenyl diphosphate. The isopentenyl-diphosphate delta-isomerase IDI1 then catalyzes the 1,3-allylic rearrangement of the homoallylic substrate isopentenyl (IPP) to its highly electrophilic allylic isomer, dimethylallyl diphosphate (DMAPP). Finally the farnesyl diphosphate synthase ERG20 catalyzes the sequential condensation of isopentenyl pyrophosphate with dimethylallyl pyrophosphate, and then with the resultant geranylpyrophosphate to the ultimate product farnesyl pyrophosphate. In Candida albicans (strain SC5314 / ATCC MYA-2876) (Yeast), this protein is Farnesyl pyrophosphate synthase.